The following is a 509-amino-acid chain: ATP synthase subunit alpha (509 aa).

ATP is bound at residue 169–176 (GDRQTGKT).

It belongs to the ATPase alpha/beta chains family. As to quaternary structure, F-type ATPases have 2 components, CF(1) - the catalytic core - and CF(0) - the membrane proton channel. CF(1) has five subunits: alpha(3), beta(3), gamma(1), delta(1), epsilon(1). CF(0) has three main subunits: a(1), b(2) and c(9-12). The alpha and beta chains form an alternating ring which encloses part of the gamma chain. CF(1) is attached to CF(0) by a central stalk formed by the gamma and epsilon chains, while a peripheral stalk is formed by the delta and b chains.

It localises to the cell inner membrane. The catalysed reaction is ATP + H2O + 4 H(+)(in) = ADP + phosphate + 5 H(+)(out). Functionally, produces ATP from ADP in the presence of a proton gradient across the membrane. The alpha chain is a regulatory subunit. This is ATP synthase subunit alpha from Methylorubrum extorquens (strain CM4 / NCIMB 13688) (Methylobacterium extorquens).